The chain runs to 147 residues: Ribonuclease 4 (147 aa).

An N-terminal signal peptide occupies residues 1 to 28; that stretch reads MALQRTHSLLLLLLLTLLGLGLVQPSYG. The residue at position 29 (Q29) is a Pyrrolidone carboxylic acid. Positions 35, 40, 68, 71, and 72 each coordinate dUMP. H40 serves as the catalytic Proton acceptor. 4 disulfides stabilise this stretch: C53–C109, C67–C120, C85–C135, and C92–C99. H144 serves as the catalytic Proton donor. F145 contributes to the dUMP binding site.

Belongs to the pancreatic ribonuclease family. Expressed in the cortical and medullary tubules of the kidney, and in the transitional epithelium of the urinary bladder (at protein level).

Its subcellular location is the secreted. Its function is as follows. Cleaves preferentially after uridine bases. Has antimicrobial activity against uropathogenic E.coli (UPEC). Probably contributes to urinary tract sterility. The sequence is that of Ribonuclease 4 (RNASE4) from Homo sapiens (Human).